Reading from the N-terminus, the 218-residue chain is UPF0502 protein Mmwyl1_3509 (218 aa).

It belongs to the UPF0502 family.

This Marinomonas sp. (strain MWYL1) protein is UPF0502 protein Mmwyl1_3509.